We begin with the raw amino-acid sequence, 346 residues long: DNA-directed RNA polymerase subunit alpha (346 aa).

Residues 1–233 (MLRDEVAVSA…DLFIPFLHAE (233 aa)) are alpha N-terminal domain (alpha-NTD). The segment at 268-346 (IELKCIFIDQ…NKFLIGNPSE (79 aa)) is alpha C-terminal domain (alpha-CTD).

This sequence belongs to the RNA polymerase alpha chain family. As to quaternary structure, in plastids the minimal PEP RNA polymerase catalytic core is composed of four subunits: alpha, beta, beta', and beta''. When a (nuclear-encoded) sigma factor is associated with the core the holoenzyme is formed, which can initiate transcription.

The protein localises to the plastid. The protein resides in the chloroplast. The enzyme catalyses RNA(n) + a ribonucleoside 5'-triphosphate = RNA(n+1) + diphosphate. DNA-dependent RNA polymerase catalyzes the transcription of DNA into RNA using the four ribonucleoside triphosphates as substrates. The chain is DNA-directed RNA polymerase subunit alpha from Ranunculus macranthus (Large buttercup).